The primary structure comprises 323 residues: MTQLPPAIFLMGPTAAGKTDLAIELTKVLPCELISVDSALVYRGMDIGTAKPSRELLAQFPHRLIDILDPAESYSAADFRTDALAAMADITARGKIPLLVGGTMLYYKALLEGLADMPAADPQVRAELEEEAARLGWQALHDQLAAVDPESAARIHPNDPQRLTRALEVYRVSGLTMTAHRQRQLAQSTEAGASGRSQLPYTVANLAIAPANRQVLHQRIAQRFTQMLEQGFIDEVVALRSRSDLHAGLPSIRAVGYRQVWDHLDGKLTSAEMQERGIIATRQLAKRQFTWLRSWADLQWLDSLDCDNLPRALKYLGTISILS.

An ATP-binding site is contributed by 12-19 (GPTAAGKT). A substrate-binding site is contributed by 14 to 19 (TAAGKT). Interaction with substrate tRNA stretches follow at residues 37-40 (DSAL) and 161-165 (QRLTR).

This sequence belongs to the IPP transferase family. In terms of assembly, monomer. Mg(2+) is required as a cofactor.

The enzyme catalyses adenosine(37) in tRNA + dimethylallyl diphosphate = N(6)-dimethylallyladenosine(37) in tRNA + diphosphate. Its function is as follows. Catalyzes the transfer of a dimethylallyl group onto the adenine at position 37 in tRNAs that read codons beginning with uridine, leading to the formation of N6-(dimethylallyl)adenosine (i(6)A). The sequence is that of tRNA dimethylallyltransferase from Pseudomonas fluorescens (strain ATCC BAA-477 / NRRL B-23932 / Pf-5).